The primary structure comprises 126 residues: NADPH-dependent 7-cyano-7-deazaguanine reductase (126 aa).

Residue cysteine 40 is the Thioimide intermediate of the active site. Residue aspartate 47 is the Proton donor of the active site. Substrate-binding positions include 62-64 and 81-82; these read IEL and HE.

It belongs to the GTP cyclohydrolase I family. QueF type 1 subfamily.

It is found in the cytoplasm. The enzyme catalyses 7-aminomethyl-7-carbaguanine + 2 NADP(+) = 7-cyano-7-deazaguanine + 2 NADPH + 3 H(+). It participates in tRNA modification; tRNA-queuosine biosynthesis. In terms of biological role, catalyzes the NADPH-dependent reduction of 7-cyano-7-deazaguanine (preQ0) to 7-aminomethyl-7-deazaguanine (preQ1). The polypeptide is NADPH-dependent 7-cyano-7-deazaguanine reductase (Campylobacter jejuni subsp. doylei (strain ATCC BAA-1458 / RM4099 / 269.97)).